Reading from the N-terminus, the 423-residue chain is Glucose-1-phosphate adenylyltransferase (423 aa).

Alpha-D-glucose 1-phosphate is bound by residues Tyr-98, Gly-163, 178–179, and Ser-189; that span reads EK.

This sequence belongs to the bacterial/plant glucose-1-phosphate adenylyltransferase family. In terms of assembly, homotetramer.

It carries out the reaction alpha-D-glucose 1-phosphate + ATP + H(+) = ADP-alpha-D-glucose + diphosphate. The protein operates within glycan biosynthesis; glycogen biosynthesis. Involved in the biosynthesis of ADP-glucose, a building block required for the elongation reactions to produce glycogen. Catalyzes the reaction between ATP and alpha-D-glucose 1-phosphate (G1P) to produce pyrophosphate and ADP-Glc. The polypeptide is Glucose-1-phosphate adenylyltransferase (Thermotoga neapolitana (strain ATCC 49049 / DSM 4359 / NBRC 107923 / NS-E)).